The primary structure comprises 385 residues: Aliphatic amidase expression-regulating protein (385 aa).

Homodimer. Forms a complex with AmiR.

Its function is as follows. Negatively regulates the expression of the aliphatic amidase operon. AmiC functions by inhibiting the action of AmiR at the protein level. It exhibits protein kinase activity. This chain is Aliphatic amidase expression-regulating protein (amiC), found in Pseudomonas aeruginosa (strain ATCC 15692 / DSM 22644 / CIP 104116 / JCM 14847 / LMG 12228 / 1C / PRS 101 / PAO1).